The primary structure comprises 652 residues: ATP-dependent zinc metalloprotease FtsH (652 aa).

Topologically, residues M1–N11 are cytoplasmic. The helical transmembrane segment at P12 to G32 threads the bilayer. At N33 to S131 the chain is on the extracellular side. The helical transmembrane segment at G132 to F152 threads the bilayer. At S153–K652 the chain is on the cytoplasmic side. G227–T234 is a binding site for ATP. H449 contacts Zn(2+). E450 is an active-site residue. H453 and D525 together coordinate Zn(2+). Positions M628–K652 are disordered. The segment covering E634–K652 has biased composition (basic and acidic residues).

It in the central section; belongs to the AAA ATPase family. This sequence in the C-terminal section; belongs to the peptidase M41 family. Homohexamer. The cofactor is Zn(2+).

It localises to the cell membrane. Its function is as follows. Acts as a processive, ATP-dependent zinc metallopeptidase for both cytoplasmic and membrane proteins. Plays a role in the quality control of integral membrane proteins. This chain is ATP-dependent zinc metalloprotease FtsH, found in Streptococcus pneumoniae (strain ATCC BAA-255 / R6).